We begin with the raw amino-acid sequence, 299 residues long: 5,10-dihydrophenazine-1-carboxylate 9-dimethylallyltransferase (299 aa).

It belongs to the aromatic prenyltransferase family.

It catalyses the reaction 5,10-dihydrophenazine 1-carboxylate + dimethylallyl diphosphate = 5,10-dihydro-9-dimethylallylphenazine 1-carboxylate + diphosphate. It participates in antibiotic biosynthesis; phenazine biosynthesis. Its activity is regulated as follows. Does not require magnesium or any other divalent metal ions for activity. Functionally, involved in the biosynthesis of prenylated phenazines. Catalyzes the transfer of a dimethylallyl moiety to C-9 of 5,10-dihydrophenazine 1-carboxylate (dihydro-PCA). Specific for both dimethylallyl diphosphate and dihydro-PCA. The protein is 5,10-dihydrophenazine-1-carboxylate 9-dimethylallyltransferase of Streptomyces anulatus (Streptomyces chrysomallus).